A 474-amino-acid chain; its full sequence is Glycogen synthase (474 aa).

Lys15 is an ADP-alpha-D-glucose binding site.

It belongs to the glycosyltransferase 1 family. Bacterial/plant glycogen synthase subfamily.

It catalyses the reaction [(1-&gt;4)-alpha-D-glucosyl](n) + ADP-alpha-D-glucose = [(1-&gt;4)-alpha-D-glucosyl](n+1) + ADP + H(+). Its pathway is glycan biosynthesis; glycogen biosynthesis. Functionally, synthesizes alpha-1,4-glucan chains using ADP-glucose. This chain is Glycogen synthase, found in Chlamydia trachomatis serovar D (strain ATCC VR-885 / DSM 19411 / UW-3/Cx).